We begin with the raw amino-acid sequence, 121 residues long: Small ribosomal subunit protein bS6m (121 aa).

Belongs to the bacterial ribosomal protein bS6 family. As to quaternary structure, component of the mitochondrial ribosome small subunit (28S) which comprises a 12S rRNA and about 30 distinct proteins.

The protein localises to the mitochondrion. This Gallus gallus (Chicken) protein is Small ribosomal subunit protein bS6m (MRPS6).